The sequence spans 216 residues: Large ribosomal subunit protein eL15 (216 aa).

Over residues 170–188 the composition is skewed to basic residues; it reads RGLRKSKGFKGTVKHKWSR. A disordered region spans residues 170–201; the sequence is RGLRKSKGFKGTVKHKWSRKQKEREEKKRHEA. Over residues 189–201 the composition is skewed to basic and acidic residues; the sequence is KQKEREEKKRHEA.

This sequence belongs to the eukaryotic ribosomal protein eL15 family.

The chain is Large ribosomal subunit protein eL15 from Saccharolobus islandicus (strain M.16.27) (Sulfolobus islandicus).